A 252-amino-acid chain; its full sequence is Gastrula zinc finger protein XlCGF28.1 (252 aa).

C2H2-type zinc fingers lie at residues 6–28, 34–56, 62–84, 90–112, 118–140, 146–168, 174–196, 202–224, and 230–252; these read FTCN…LRSH, FTCS…FRGH, SACT…IRSH, YTCT…VRSH, FKCT…LRFH, TTCS…FRVH, FTCT…SYLH, YTCT…SYLH, and FTCT…SHTH.

It belongs to the krueppel C2H2-type zinc-finger protein family.

The protein resides in the nucleus. May be involved in transcriptional regulation. The chain is Gastrula zinc finger protein XlCGF28.1 from Xenopus laevis (African clawed frog).